A 364-amino-acid chain; its full sequence is tRNA 2-selenouridine synthase (364 aa).

A Rhodanese domain is found at 14–137 (LIADTPIIDV…LRQTTIQATI (124 aa)). The S-selanylcysteine intermediate role is filled by Cys97.

It belongs to the SelU family. As to quaternary structure, monomer.

It catalyses the reaction 5-methylaminomethyl-2-thiouridine(34) in tRNA + selenophosphate + (2E)-geranyl diphosphate + H2O + H(+) = 5-methylaminomethyl-2-selenouridine(34) in tRNA + (2E)-thiogeraniol + phosphate + diphosphate. The catalysed reaction is 5-methylaminomethyl-2-thiouridine(34) in tRNA + (2E)-geranyl diphosphate = 5-methylaminomethyl-S-(2E)-geranyl-thiouridine(34) in tRNA + diphosphate. It carries out the reaction 5-methylaminomethyl-S-(2E)-geranyl-thiouridine(34) in tRNA + selenophosphate + H(+) = 5-methylaminomethyl-2-(Se-phospho)selenouridine(34) in tRNA + (2E)-thiogeraniol. The enzyme catalyses 5-methylaminomethyl-2-(Se-phospho)selenouridine(34) in tRNA + H2O = 5-methylaminomethyl-2-selenouridine(34) in tRNA + phosphate. In terms of biological role, involved in the post-transcriptional modification of the uridine at the wobble position (U34) of tRNA(Lys), tRNA(Glu) and tRNA(Gln). Catalyzes the conversion of 2-thiouridine (S2U-RNA) to 2-selenouridine (Se2U-RNA). Acts in a two-step process involving geranylation of 2-thiouridine (S2U) to S-geranyl-2-thiouridine (geS2U) and subsequent selenation of the latter derivative to 2-selenouridine (Se2U) in the tRNA chain. In Escherichia coli O139:H28 (strain E24377A / ETEC), this protein is tRNA 2-selenouridine synthase.